The primary structure comprises 576 residues: Putative ankyrin repeat protein L86 (576 aa).

ANK repeat units follow at residues 68 to 101, 118 to 147, 159 to 188, 192 to 223, 227 to 260, 264 to 300, 304 to 337, 341 to 373, 377 to 408, 412 to 446, and 448 to 480; these read HGWT…DPNI, TRIN…NVNF, SGGF…NPNI, KGNT…DLNS, KRKT…NPNI, KGNT…NPNI, SGIS…DPNI, QGLT…DPNI, KGKN…NPNA, KGRT…SLTD, and NGKK…TFDV.

The polypeptide is Putative ankyrin repeat protein L86 (Acanthamoeba polyphaga mimivirus (APMV)).